Reading from the N-terminus, the 241-residue chain is Antimicrobial ginkbilobin-2-like protein (241 aa).

Positions 1–23 (MLSSKYISVSFLLLSLSLHAVNC) are cleaved as a signal peptide. Gnk2-homologous domains are found at residues 25-127 (DPLY…NIDF) and 133-238 (NKNK…LYPF). Cystine bridges form between C81–C90, C93–C118, C192–C201, and C204–C229. N89 carries N-linked (GlcNAc...) asparagine glycosylation.

It belongs to the cysteine-rich repeat secretory protein family.

It localises to the secreted. Possesses antimicrobial activity toward the oomycete Phytophthora cinnamomi (ink disease agent), thus reducing its growth rate and confering an increased resistance to the plant. In Castanea crenata (Japanese chestnut), this protein is Antimicrobial ginkbilobin-2-like protein.